Reading from the N-terminus, the 337-residue chain is 4-hydroxyproline 2-epimerase (337 aa).

The active-site Proton acceptor is the Cys-91. Residues 92-93, Asp-252, and 257-258 each bind substrate; these read GH and GT.

The protein belongs to the proline racemase family.

The catalysed reaction is trans-4-hydroxy-L-proline = cis-4-hydroxy-D-proline. In terms of biological role, catalyzes the epimerization of trans-4-hydroxy-L-proline (t4LHyp) to cis-4-hydroxy-D-proline (c4DHyp). Is likely involved in a degradation pathway that converts t4LHyp to alpha-ketoglutarate. Displays no proline racemase activity. This chain is 4-hydroxyproline 2-epimerase, found in Cereibacter sphaeroides (strain ATCC 17029 / ATH 2.4.9) (Rhodobacter sphaeroides).